The chain runs to 101 residues: Small ribosomal subunit protein uS14 (101 aa).

Belongs to the universal ribosomal protein uS14 family. Part of the 30S ribosomal subunit. Contacts proteins S3 and S10.

Binds 16S rRNA, required for the assembly of 30S particles and may also be responsible for determining the conformation of the 16S rRNA at the A site. The protein is Small ribosomal subunit protein uS14 of Protochlamydia amoebophila (strain UWE25).